Consider the following 235-residue polypeptide: Orotidine 5'-phosphate decarboxylase (235 aa).

Substrate contacts are provided by residues Asp-16, Lys-38, Asp-65 to Thr-74, Thr-120, Arg-181, Gln-190, Gly-210, and Arg-211. Catalysis depends on Lys-67, which acts as the Proton donor.

Belongs to the OMP decarboxylase family. Type 1 subfamily. As to quaternary structure, homodimer.

The enzyme catalyses orotidine 5'-phosphate + H(+) = UMP + CO2. Its pathway is pyrimidine metabolism; UMP biosynthesis via de novo pathway; UMP from orotate: step 2/2. In terms of biological role, catalyzes the decarboxylation of orotidine 5'-monophosphate (OMP) to uridine 5'-monophosphate (UMP). The chain is Orotidine 5'-phosphate decarboxylase from Rhodopseudomonas palustris (strain BisA53).